Here is a 414-residue protein sequence, read N- to C-terminus: Esterase FrsA (414 aa).

Belongs to the FrsA family.

The catalysed reaction is a carboxylic ester + H2O = an alcohol + a carboxylate + H(+). Catalyzes the hydrolysis of esters. This is Esterase FrsA from Citrobacter koseri (strain ATCC BAA-895 / CDC 4225-83 / SGSC4696).